The chain runs to 428 residues: MSIIEEARRGIITDEIKSISKLEKVSPEKVRKRIAEGKIMLLRNVKRPSKKLVPIGKGLTTKININIGTSSEVIDLDMELEKVKISNKWGDTLMDLSTGGDIDEIRRKIIDKSDLPVGTVPVYQAFIQSFKKKSGGAYFSEDELLSIVERQLKDGVAFMTIHAGLTRELAIRALKSDRVIPIVSRGGDMIAGWMIHNGKENPYRTNWKYLLELFKEYDATISLGDALRPGATADAHDEFQIGELIETARLVKDAINNGVQVMVEGPGHVPLNEVAWDVKLMKKLTGGVPYYVLGPLVIDVGAPYDHIASSIGAAIASAAGADLLCYLTPAEHLSLPNAKQVEEGAIAYRIAAHAGDIVKLGKKVRKWDDEVSYYRGKLEWDKMIEKLIDPEQAYKVYTQFGEPNVKACTMCGGYCPMMWAMEQVKKIG.

Residues asparagine 66, methionine 94, tyrosine 123, histidine 162, 184–186 (SRG), 225–228 (DALR), and glutamate 264 each bind substrate. Histidine 268 contacts Zn(2+). Tyrosine 291 provides a ligand contact to substrate. A Zn(2+)-binding site is contributed by histidine 332. 3 residues coordinate [4Fe-4S] cluster: cysteine 408, cysteine 411, and cysteine 415.

The protein belongs to the ThiC family. The cofactor is [4Fe-4S] cluster.

The enzyme catalyses 5-amino-1-(5-phospho-beta-D-ribosyl)imidazole + S-adenosyl-L-methionine = 4-amino-2-methyl-5-(phosphooxymethyl)pyrimidine + CO + 5'-deoxyadenosine + formate + L-methionine + 3 H(+). The protein operates within cofactor biosynthesis; thiamine diphosphate biosynthesis. Its function is as follows. Catalyzes the synthesis of the hydroxymethylpyrimidine phosphate (HMP-P) moiety of thiamine from aminoimidazole ribotide (AIR) in a radical S-adenosyl-L-methionine (SAM)-dependent reaction. This chain is Phosphomethylpyrimidine synthase, found in Sulfolobus acidocaldarius (strain ATCC 33909 / DSM 639 / JCM 8929 / NBRC 15157 / NCIMB 11770).